A 239-amino-acid polypeptide reads, in one-letter code: MSNNKDVAIKSSGGKKIREARIKVRSDSLYNLTTAVEKLKSASYVKFDPTLEIVMKLGIDPRHSDQMVRGVVNLPAGTGKTVRVAVICKEEREEEAKVAGADLVGSTNIIDEIKAGKINFDVCIATPDMMAVIGSVARILGPKGLMPNPKLGTVTLDIKGAVKNAKSGQVEYRAEKAGIIHAGLGKLSFPDQDLLKNLKAFIDAVVKAKPTGVKGSYLKAIYLSSTMGASVQIDLASIA.

This sequence belongs to the universal ribosomal protein uL1 family. Part of the 50S ribosomal subunit.

Binds directly to 23S rRNA. The L1 stalk is quite mobile in the ribosome, and is involved in E site tRNA release. Its function is as follows. Protein L1 is also a translational repressor protein, it controls the translation of the L11 operon by binding to its mRNA. The sequence is that of Large ribosomal subunit protein uL1 from Rickettsia bellii (strain OSU 85-389).